A 1258-amino-acid chain; its full sequence is Splicing factor, arginine/serine-rich 19 (1258 aa).

6 disordered regions span residues 1 to 32 (MEEE…LSPS), 159 to 345 (KTVS…PRRR), 370 to 398 (GGPA…EEEP), 410 to 1034 (PRQP…PPPM), 1114 to 1154 (GSLP…DKYL), and 1223 to 1258 (FRKH…LPPL). The span at 7–27 (SRGKTEESGEDRGDGPPDRDP) shows a compositional bias: basic and acidic residues. A compositionally biased stretch (low complexity) spans 193–207 (SSASSSPSPSPSSSS). Residues 208–223 (PSPPPPPPPPPPPALP) show a composition bias toward pro residues. Positions 228–237 (DIYDPFHPTD) are enriched in basic and acidic residues. The residue at position 241 (Ser-241) is a Phosphoserine. Residues 256 to 266 (TGSNPSSSAGT) are compositionally biased toward polar residues. A compositionally biased stretch (acidic residues) spans 269–283 (PEEEEEEEEEEEEEG). Position 329 is a phosphothreonine (Thr-329). Positions 374 to 383 (LPLPPLPPTD) are enriched in pro residues. A compositionally biased stretch (acidic residues) spans 384–395 (PEIEEGEIVQPE). The segment covering 414–426 (PASVATLASVAAP) has biased composition (low complexity). Phosphoserine occurs at positions 444 and 449. Basic residues predominate over residues 480-491 (KILTQRRERYRQ). Residues Ser-493, Ser-495, Ser-512, and Ser-520 each carry the phosphoserine modification. 2 stretches are compositionally biased toward basic residues: residues 540–555 (TARR…RSRS) and 562–579 (RGSH…RRRS). Ser-579 and Ser-581 each carry phosphoserine. The span at 594–613 (RERHRGKRREGGKKKKKRSR) shows a compositional bias: basic residues. The span at 614 to 625 (SRAEKRSGDLEK) shows a compositional bias: basic and acidic residues. The residue at position 665 (Thr-665) is a Phosphothreonine. Residues Ser-678 and Ser-684 each carry the phosphoserine modification. A Phosphotyrosine modification is found at Tyr-691. Phosphoserine occurs at positions 693 and 697. Basic and acidic residues-rich tracts occupy residues 698 to 711 (ADER…DRRR) and 721 to 743 (SREK…DRSS). 2 stretches are compositionally biased toward low complexity: residues 752-777 (SAPG…SCSS) and 795-806 (SSTTPAKDSSSS). Lys-814 participates in a covalent cross-link: Glycyl lysine isopeptide (Lys-Gly) (interchain with G-Cter in SUMO2). Positions 815 to 833 (FSRDRESRSPFLKPDERAP) are enriched in basic and acidic residues. Phosphoserine is present on residues Ser-821 and Ser-823. The span at 845 to 877 (KPKKTKAKAKAGAKKAKGTKGKTKPSKTRKKVR) shows a compositional bias: basic residues. Residues Ser-878, Ser-885, Ser-912, and Ser-914 each carry the phosphoserine modification. A compositionally biased stretch (pro residues) spans 924–937 (STPPPKVAPPPPAL). Residues Thr-925 and Thr-938 each carry the phosphothreonine modification. Residues 940 to 949 (DSQTVDSSCK) show a composition bias toward polar residues. Ser-941 carries the phosphoserine modification. A Phosphothreonine modification is found at Thr-950. Over residues 971–986 (EEEEEEEEEEEEEEEQ) the composition is skewed to acidic residues. A compositionally biased stretch (low complexity) spans 987–1019 (QPATTTATSTAAAAPSTAPSAGSTAGDSGAEDG). The interval 1133–1258 (PASDKREGSS…GGPGLPLPPL (126 aa)) is necessary for interaction with the CTD domain of POLR2A. Over residues 1135-1154 (SDKREGSSSSEGRGDTDKYL) the composition is skewed to basic and acidic residues. The span at 1246–1258 (PDKGGPGLPLPPL) shows a compositional bias: pro residues.

Belongs to the splicing factor SR family. In terms of assembly, interacts with POLR2A.

The protein resides in the nucleus. In terms of biological role, may function in pre-mRNA splicing. In Rattus norvegicus (Rat), this protein is Splicing factor, arginine/serine-rich 19 (Scaf1).